The chain runs to 885 residues: Exosome complex component 10 (885 aa).

A compositionally biased stretch (basic and acidic residues) spans 1 to 10; sequence MAPPSPREHQ. 2 disordered regions span residues 1–23 and 210–232; these read MAPP…PDAE and KPLP…EDLD. Residue Lys-19 forms a Glycyl lysine isopeptide (Lys-Gly) (interchain with G-Cter in SUMO2) linkage. A compositionally biased stretch (basic and acidic residues) spans 217-230; that stretch reads SKERRERPQDRPED. In terms of domain architecture, 3'-5' exonuclease spans 289–455; the sequence is HVVSSLDELV…YIYDRMRLEL (167 aa). The Mg(2+) site is built by Asp-313, Glu-315, Asp-371, and Asp-440. One can recognise an HRDC domain in the interval 503 to 583; the sequence is NSQQLTAFQL…QQAREMPLLK (81 aa). Residue Lys-583 forms a Glycyl lysine isopeptide (Lys-Gly) (interchain with G-Cter in SUMO1); alternate linkage. A Glycyl lysine isopeptide (Lys-Gly) (interchain with G-Cter in SUMO2); alternate cross-link involves residue Lys-583. Lys-710 participates in a covalent cross-link: Glycyl lysine isopeptide (Lys-Gly) (interchain with G-Cter in SUMO2). The tract at residues 730-885 is disordered; sequence VQKEPKEAAK…RGFRHNWPKR (156 aa). Composition is skewed to basic and acidic residues over residues 732-756 and 776-794; these read KEPK…KEES and ATKK…EQKQ. At Ser-821 the chain carries Phosphoserine. Residues Lys-833, Lys-859, and Lys-873 each participate in a glycyl lysine isopeptide (Lys-Gly) (interchain with G-Cter in SUMO2) cross-link.

This sequence belongs to the exosome component 10/RRP6 family. In terms of assembly, component of the RNA exosome complex. The catalytically inactive RNA exosome core complex (Exo-9) associates with the catalytic subunit EXOSC10/RRP6 (via its N-terminus). Exo-9 may associate with DIS3 to form the nucleolar exosome complex, or DIS3L to form the cytoplasmic exosome complex. The RNA exosome complex interacts with cofactors C1D/RRP47, MPHOSPH6/MPP6 and MTREX/MTR4. Interacts with MTREX; the interaction with MTREX mediates the association of MTREX with nuclear RNA exosomes. Part of the small subunit (SSU) processome, composed of more than 70 proteins and the RNA chaperone small nucleolar RNA (snoRNA) U3. Interacts with ALYREF/THOC4. Interacts with DHX36; this interaction occurs in a RNase-insensitive manner. Interacts with NRDE2. Interacts (via C-terminus) with USP36 (via C-terminus); the interaction is facilitated by the association with RNA and promotes sumoylation of EXOSC10. The cofactor is Mg(2+). Sumoylated by USP36; sumoylation does not significantly affect EXOSC10 nucleolar localization and association with core exosome and USP36, but regulates the nucleolar RNA exosome activity in rRNA processing by promoting binding of EXOSC10 to pre-rRNAs. Effects of sumoylation on EXOSC10 levels vary between different studies. Sumoylation of EXOSC10 is required for the modulation of EXOSC10 effects on cellular protein translation and cell proliferation. Sumoylation is promoted by mild hypothermia. In terms of tissue distribution, expressed in testis (at protein level).

The protein localises to the cytoplasm. Its subcellular location is the nucleus. The protein resides in the nucleolus. It localises to the nucleoplasm. In terms of biological role, catalytic component of the RNA exosome complex which has 3'-&gt;5' exoribonuclease activity and participates in a multitude of cellular RNA processing and degradation events. In the nucleus, the RNA exosome complex is involved in proper maturation of stable RNA species such as rRNA, snRNA and snoRNA, in the elimination of RNA processing by-products and non-coding 'pervasive' transcripts, such as antisense RNA species and promoter-upstream transcripts (PROMPTs), and of mRNAs with processing defects, thereby limiting or excluding their export to the cytoplasm. Part of the small subunit (SSU) processome, first precursor of the small eukaryotic ribosomal subunit. During the assembly of the SSU processome in the nucleolus, many ribosome biogenesis factors, an RNA chaperone and ribosomal proteins associate with the nascent pre-rRNA and work in concert to generate RNA folding, modifications, rearrangements and cleavage as well as targeted degradation of pre-ribosomal RNA by the RNA exosome. The RNA exosome may be involved in Ig class switch recombination (CSR) and/or Ig variable region somatic hypermutation (SHM) by targeting AICDA deamination activity to transcribed dsDNA substrates. In the cytoplasm, the RNA exosome complex is involved in general mRNA turnover and specifically degrades inherently unstable mRNAs containing AU-rich elements (AREs) within their 3' untranslated regions, and in RNA surveillance pathways, preventing translation of aberrant mRNAs. It seems to be involved in degradation of histone mRNA. EXOSC10 is required for nucleolar localization of C1D and probably mediates the association of MTREX, C1D and MPHOSPH6 with the RNA exosome involved in the maturation of 5.8S rRNA. Plays a role in the recruitment of replication protein A complex (RPA) and RAD51 to DNA double-strand breaks caused by irradiation, contributing to DNA repair by homologous recombination. Regulates levels of damage-induced RNAs in order to prevent DNA-RNA hybrid formation at DNA double-strand breaks and limit DNA end resection after damage. Plays a role in oocyte development, maturation and survival. Required for normal testis development and mitotic division of spermatogonia. Plays a role in proper embryo development. Required for global protein translation. Required for cell proliferation. This Rattus norvegicus (Rat) protein is Exosome complex component 10.